The chain runs to 265 residues: Isoprenyl transferase (265 aa).

Asp35 is a catalytic residue. Asp35 lines the Mg(2+) pocket. Residues 36-39 (GNGR), Trp40, Arg48, His52, and 80-82 (STE) each bind substrate. Residue Asn83 is the Proton acceptor of the active site. Substrate contacts are provided by residues Trp84, Arg86, Arg203, and 209–211 (RIS). Residue Glu222 participates in Mg(2+) binding.

This sequence belongs to the UPP synthase family. In terms of assembly, homodimer. Mg(2+) serves as cofactor.

In terms of biological role, catalyzes the condensation of isopentenyl diphosphate (IPP) with allylic pyrophosphates generating different type of terpenoids. The sequence is that of Isoprenyl transferase from Prochlorococcus marinus (strain MIT 9313).